We begin with the raw amino-acid sequence, 607 residues long: NADH-ubiquinone oxidoreductase chain 5 (607 aa).

16 helical membrane-spanning segments follow: residues 3 to 23, 35 to 55, 84 to 104, 117 to 137, 140 to 160, 171 to 191, 210 to 230, 241 to 261, 272 to 292, 301 to 320, 324 to 344, 365 to 385, 405 to 427, 457 to 477, 482 to 502, and 586 to 606; these read IFTTSILLIFILLLSPILISM, YTTTSIKFSFIISLLPLLMFF, FFSILFTSVALFVTWSIMQFS, FIKYLTLFLITMLILTSANNM, LFIGWEGVGIMSFLLIGWWYG, AILYNRIGDIGFILAMVWFSL, LIPLMGLLIAATGKSAQFGLH, TPVSALLHSSTMVVAGIFLLV, FILTTMLCLGALTTLFTAICA, IIAFSTSSQLGLMMVTLGMN, LAFLHICTHAFFKAMLFMCSG, IMPFTSSCLVIGSLALTGMPF, NAWALLITLIATSMTAMYSMRII, LAFGSIFAGFVISYNIPPTSI, MPWFLKTTALIISVLGFLIAL, and LYFMSFLINIILIIILYSINL.

It belongs to the complex I subunit 5 family. As to quaternary structure, core subunit of respiratory chain NADH dehydrogenase (Complex I) which is composed of 45 different subunits.

The protein resides in the mitochondrion inner membrane. The catalysed reaction is a ubiquinone + NADH + 5 H(+)(in) = a ubiquinol + NAD(+) + 4 H(+)(out). Its function is as follows. Core subunit of the mitochondrial membrane respiratory chain NADH dehydrogenase (Complex I) which catalyzes electron transfer from NADH through the respiratory chain, using ubiquinone as an electron acceptor. Essential for the catalytic activity and assembly of complex I. This chain is NADH-ubiquinone oxidoreductase chain 5 (Mtnd5), found in Mus musculus (Mouse).